The chain runs to 119 residues: Immunoglobulin heavy variable 3-73 (119 aa).

Positions 1-19 (MEFGLSWVFLVAILKGVQC) are cleaved as a signal peptide. The tract at residues 20-44 (EVQLVESGGGLVQPGGSLKLSCAAS) is framework-1. Positions 20 to 119 (EVQLVESGGG…EDTAVYYCTR (100 aa)) constitute an Ig-like domain. A disulfide bond links cysteine 41 and cysteine 117. The interval 45–52 (GFTFSGSA) is complementarity-determining-1. The segment at 53 to 69 (MHWVRQASGKGLEWVGR) is framework-2. The tract at residues 70-79 (IRSKANSYAT) is complementarity-determining-2. The framework-3 stretch occupies residues 80-117 (AYAASVKGRFTISRDDSKNTAYLQMNSLKTEDTAVYYC). Residues 118 to 119 (TR) are complementarity-determining-3.

Immunoglobulins are composed of two identical heavy chains and two identical light chains; disulfide-linked.

It localises to the secreted. It is found in the cell membrane. In terms of biological role, v region of the variable domain of immunoglobulin heavy chains that participates in the antigen recognition. Immunoglobulins, also known as antibodies, are membrane-bound or secreted glycoproteins produced by B lymphocytes. In the recognition phase of humoral immunity, the membrane-bound immunoglobulins serve as receptors which, upon binding of a specific antigen, trigger the clonal expansion and differentiation of B lymphocytes into immunoglobulins-secreting plasma cells. Secreted immunoglobulins mediate the effector phase of humoral immunity, which results in the elimination of bound antigens. The antigen binding site is formed by the variable domain of one heavy chain, together with that of its associated light chain. Thus, each immunoglobulin has two antigen binding sites with remarkable affinity for a particular antigen. The variable domains are assembled by a process called V-(D)-J rearrangement and can then be subjected to somatic hypermutations which, after exposure to antigen and selection, allow affinity maturation for a particular antigen. The protein is Immunoglobulin heavy variable 3-73 of Homo sapiens (Human).